We begin with the raw amino-acid sequence, 88 residues long: Putative septation protein SpoVG (88 aa).

Belongs to the SpoVG family.

Could be involved in septation. This Caldicellulosiruptor bescii (strain ATCC BAA-1888 / DSM 6725 / KCTC 15123 / Z-1320) (Anaerocellum thermophilum) protein is Putative septation protein SpoVG.